The primary structure comprises 359 residues: 4-galactosyl-N-acetylglucosaminide 3-alpha-L-fucosyltransferase 9 (359 aa).

Topologically, residues 1–11 are cytoplasmic; sequence MTSTSKGILRP. Residues 12–32 form a helical; Signal-anchor for type II membrane protein membrane-spanning segment; it reads FLIVCIILGCFMACLLIYIKP. Residues 33–359 lie on the Lumenal side of the membrane; sequence TNSWIFSPME…VGNLEKWFWN (327 aa). Asn-62 carries an N-linked (GlcNAc...) asparagine glycan. Residues 63–168 form an acceptor-binding region; sequence ETTILVWVWP…RRDSDIQVPY (106 aa). Residue Gln-75 coordinates a beta-D-galactosyl-(1-&gt;4)-N-acetyl-beta-D-glucosaminyl derivative. Cystine bridges form between Cys-82–Cys-335, Cys-91–Cys-338, and Cys-190–Cys-238. Asn-101 carries N-linked (GlcNAc...) asparagine glycosylation. Glu-137 is an a beta-D-galactosyl-(1-&gt;4)-N-acetyl-beta-D-glucosaminyl derivative binding site. Catalysis depends on Glu-137, which acts as the Nucleophile. Glu-137 lines the GDP-beta-L-fucose pocket. Asn-153 carries N-linked (GlcNAc...) asparagine glycosylation. GDP-beta-L-fucose-binding residues include Tyr-168, Val-192, Ser-194, Asn-195, Arg-202, Val-226, Tyr-241, Asn-246, Tyr-252, Glu-255, and Lys-256. The interval 169-326 is donor-binding; that stretch reads GFLTVSTNPF…NWRKDFTVNL (158 aa). The interval 327–359 is acceptor-binding; it reads PRFWESHACLACDHVKRHQEYKSVGNLEKWFWN.

This sequence belongs to the glycosyltransferase 10 family. Homodimer. N-glycosylated with complex-type N-glycans. The glycan alpha-D-Man-(1-&gt;3)-beta-D-Man-(1-&gt;4)-GlcNAc-(1-&gt;4)-GlcNAc is attached at Asn-153. In terms of tissue distribution, strongly expressed in forebrain and stomach, lower expression in spleen and peripheral blood leukocytes, and no expression in small intestine, colon, liver, lung, kidney, adrenal cortex or uterus. Highly expressed in granulocytes. Not expressed in monocytes.

It is found in the golgi apparatus. The protein resides in the trans-Golgi network membrane. Its subcellular location is the golgi apparatus membrane. It carries out the reaction a beta-D-galactosyl-(1-&gt;4)-N-acetyl-beta-D-glucosaminyl derivative + GDP-beta-L-fucose = a beta-D-galactosyl-(1-&gt;4)-[alpha-L-fucosyl-(1-&gt;3)]-N-acetyl-beta-D-glucosaminyl derivative + GDP + H(+). It catalyses the reaction an alpha-Neu5Ac-(2-&gt;3)-beta-D-Gal-(1-&gt;4)-beta-D-GlcNAc-(1-&gt;3)-beta-D-Gal-(1-&gt;4)-beta-D-GlcNAc derivative + GDP-beta-L-fucose = an alpha-Neu5Ac-(2-&gt;3)-beta-D-Gal-(1-&gt;4)-beta-D-GlcNAc-(1-&gt;3)-beta-D-Gal-(1-&gt;4)-[alpha-L-Fuc-(1-&gt;3)]-beta-D-GlcNAc derivative + GDP + H(+). The catalysed reaction is alpha-N-glycoloylneuraminosyl-(2-&gt;3)-beta-D-galactosyl-(1-&gt;4)-N-acetyl-beta-D-glucosaminyl-(1-&gt;3)-beta-D-galactosyl-(1-&gt;4)-N-acetyl-beta-D-glucosaminyl-(1-&gt;3)-beta-D-galactosyl-(1-&gt;4)-beta-D-glucosyl-(1&lt;-&gt;1')-ceramide + GDP-beta-L-fucose = alpha-N-glycoloylneuraminosyl-(2-&gt;3)-beta-D-galactosyl-(1-&gt;4)-N-acetyl-beta-D-glucosaminyl-(1-&gt;3)-beta-D-galactosyl-(1-&gt;4)-[alpha-L-fucosyl-(1-&gt;3)]-N-acetyl-beta-D-glucosaminyl-(1-&gt;3)-beta-D-galactosyl-(1-&gt;4)-beta-D-glucosyl-(1&lt;-&gt;1')-ceramide + GDP + H(+). The enzyme catalyses alpha-D-galactosyl-(1-&gt;3)-beta-D-galactosyl-(1-&gt;4)-N-acetyl-beta-D-glucosaminyl-(1-&gt;3)-beta-D-galactosyl-(1-&gt;4)-beta-D-glucosyl-(1&lt;-&gt;1')-ceramide + GDP-beta-L-fucose = a neolactoside IV(3)-alpha-Gal,III(3)-alpha-Fuc-nLc4Cer + GDP + H(+). It carries out the reaction a neolactoside nLc4Cer + GDP-beta-L-fucose = a neolactoside III(3)-alpha-Fuc-nLc4Cer + GDP + H(+). It catalyses the reaction an N-acetyl-alpha-neuraminyl-(2-&gt;3)-beta-D-galactosyl-(1-&gt;4)-N-acetyl-beta-D-glucosaminyl derivative + GDP-beta-L-fucose = an alpha-Neu5Ac-(2-&gt;3)-beta-D-Gal-(1-&gt;4)-[alpha-L-Fuc-(1-&gt;3)]-beta-D-GlcNAc derivative + GDP + H(+). The catalysed reaction is beta-D-Gal-(1-&gt;4)-beta-D-GlcNAc-(1-&gt;3)-beta-D-Gal-(1-&gt;4)-D-Glc + GDP-beta-L-fucose = beta-D-Gal-(1-&gt;4)-[alpha-L-Fuc-(1-&gt;3)]-beta-D-GlcNAc-(1-&gt;3)-beta-D-Gal-(1-&gt;4)-D-Glc + GDP + H(+). The enzyme catalyses an alpha-L-Fuc-(1-&gt;2)-beta-D-Gal-(1-&gt;4)-beta-D-GlcNAc derivative + GDP-beta-L-fucose = an alpha-L-Fuc-(1-&gt;2)-beta-D-Gal-(1-&gt;4)-[alpha-L-Fuc-(1-&gt;3)]-beta-D-GlcNAc derivative + GDP + H(+). It functions in the pathway protein modification; protein glycosylation. The protein operates within glycolipid biosynthesis. Its activity is regulated as follows. Activated by Mn2+. Catalyzes alpha(1-&gt;3) linkage of fucosyl moiety transferred from GDP-beta-L-fucose to N-acetyl glucosamine (GlcNAc) within type 2 lactosamine (LacNAc, beta-D-Gal-(1-&gt;4)-beta-D-GlcNAc-) glycan attached to glycolipids and N- or O-linked glycoproteins. Fucosylates distal type 2 LacNAc and its fucosylated (H-type 2 LacNAc) and sialylated (sialyl-type 2 LacNAc) derivatives to form Lewis x (Lex) (CD15) and Lewis y (Ley) antigenic epitopes involved in cell adhesion and differentiation. Generates Lex epitopes in the brain, presumably playing a role in the maintenance of neuronal stemness and neurite outgrowth in progenitor neural cells. Fucosylates the internal type 2 LacNAc unit of the polylactosamine chain to form VIM-2 antigen that serves as recognition epitope for SELE. Can also modify milk oligosaccharides, in particular type 2 tetrasaccharide LNnT. The sequence is that of 4-galactosyl-N-acetylglucosaminide 3-alpha-L-fucosyltransferase 9 from Homo sapiens (Human).